A 166-amino-acid polypeptide reads, in one-letter code: MLRSLQHVESHINQCRRISTTSTLLKNRAGKTKSTSNRTQLLTYEMAQKPHHIGVRKSWLTWHSQNLEEFRQSQPLVVAQDEVVRRFIRGFFPQNLVVSGNEIVIKRRGNVLIVAGFLQYSRRLDIRRIYWMFGFAEEFLSILLKQPVKLELSFVESEETVAYNYI.

Residues 1–25 (MLRSLQHVESHINQCRRISTTSTLL) constitute a mitochondrion transit peptide.

It belongs to the universal ribosomal protein uS3 family. Component of the mitochondrial ribosome small subunit (28S) which comprises a 12S rRNA and about 30 distinct proteins.

It is found in the mitochondrion. The protein is Small ribosomal subunit protein uS3m (mrps-24) of Caenorhabditis briggsae.